The chain runs to 486 residues: Coronin-1B (486 aa).

Ser-2 is subject to Phosphoserine; by PKC. WD repeat units follow at residues 80–120, 130–170, 174–213, 217–260, and 265–305; these read GHTG…LTSP, GHTK…ELYR, LHPD…LVAE, AHEG…EPMA, and DSSN…PYIH. A disordered region spans residues 404–444; it reads LKVSRRNVLSDSRPTSAARPAAPAPAAPAPAAAASSSLSGA. Residues 432–444 show a composition bias toward low complexity; the sequence is APAAAASSSLSGA. Positions 446–484 form a coiled coil; that stretch reads EAGKLEEVMRELRALRALVKEQGERIGRLEEQLGRVENG.

This sequence belongs to the WD repeat coronin family. As to quaternary structure, forms homooligomers, but does not form complexes with the other coronins. Interacts with Arp2/3 complex components, including ACTR2, ARPC1B and ARPC2. Binds actin. Post-translationally, phosphorylated in vivo by PKC in response to cholinergic stimulation. Phosphorylation on Ser-2 regulates the interaction with the Arp2/3 complex and cell motility in fibroblasts. Phosphorylation does not seem to affect subcellular location.

It localises to the cytoplasm. It is found in the cytoskeleton. Its subcellular location is the stress fiber. Regulates leading edge dynamics and cell motility in fibroblasts. May be involved in cytokinesis and signal transduction. The chain is Coronin-1B (CORO1B) from Oryctolagus cuniculus (Rabbit).